Reading from the N-terminus, the 94-residue chain is MICOS complex subunit MIC12 (94 aa).

A helical membrane pass occupies residues 7-23 (YGSFSVVASVLGASYYY).

It belongs to the MICOS complex subunit Mic12 family. As to quaternary structure, component of the mitochondrial contact site and cristae organizing system (MICOS) complex.

The protein resides in the mitochondrion inner membrane. In terms of biological role, component of the MICOS complex, a large protein complex of the mitochondrial inner membrane that plays crucial roles in the maintenance of crista junctions, inner membrane architecture, and formation of contact sites to the outer membrane. This chain is MICOS complex subunit MIC12 (AIM5), found in Eremothecium gossypii (strain ATCC 10895 / CBS 109.51 / FGSC 9923 / NRRL Y-1056) (Yeast).